The primary structure comprises 231 residues: Regulatory protein VanRc (231 aa).

The 114-residue stretch at K4–L117 folds into the Response regulatory domain. D53 bears the 4-aspartylphosphate mark. The ompR/PhoB-type DNA-binding region spans V132–K231.

In terms of processing, phosphorylated by VanSc.

It localises to the cytoplasm. Functionally, member of the two-component regulatory system VanSc/VanRc. Binds to the promoter regions of target genes. Activates the transcription of vanC1 and vanXYC in response to vancomycin which results in vancomycin resistance. The polypeptide is Regulatory protein VanRc (Enterococcus gallinarum).